The following is a 228-amino-acid chain: 2,3-bisphosphoglycerate-dependent phosphoglycerate mutase (228 aa).

Substrate contacts are provided by residues 8–15 (RHGQSVWN), 21–22 (TG), R60, 87–90 (ERHY), K98, 114–115 (RR), and 183–184 (GN). The active-site Tele-phosphohistidine intermediate is H9. E87 serves as the catalytic Proton donor/acceptor.

The protein belongs to the phosphoglycerate mutase family. BPG-dependent PGAM subfamily. Homodimer.

It carries out the reaction (2R)-2-phosphoglycerate = (2R)-3-phosphoglycerate. It functions in the pathway carbohydrate degradation; glycolysis; pyruvate from D-glyceraldehyde 3-phosphate: step 3/5. In terms of biological role, catalyzes the interconversion of 2-phosphoglycerate and 3-phosphoglycerate. This chain is 2,3-bisphosphoglycerate-dependent phosphoglycerate mutase, found in Rhodospirillum centenum (strain ATCC 51521 / SW).